A 223-amino-acid polypeptide reads, in one-letter code: Ion-translocating oxidoreductase complex subunit E (223 aa).

7 helical membrane passes run 17-37, 38-58, 68-88, 91-111, 124-144, 156-176, and 181-201; these read SLVQ…TINA, IGLG…ISIL, IPIY…LLHA, FNLY…CIVV, VISF…MFVI, FLFG…FTFI, and TIIL…VIAF.

The protein belongs to the NqrDE/RnfAE family. The complex is composed of six subunits: RnfA, RnfB, RnfC, RnfD, RnfE and RnfG.

It is found in the cell inner membrane. Part of a membrane-bound complex that couples electron transfer with translocation of ions across the membrane. The protein is Ion-translocating oxidoreductase complex subunit E of Buchnera aphidicola subsp. Schizaphis graminum (strain Sg).